The sequence spans 628 residues: Chaperone protein HtpG (628 aa).

The a; substrate-binding stretch occupies residues 1-337; the sequence is MSEKKYTFET…SADLPLNVSR (337 aa). A b region spans residues 338–554; that stretch reads EILQHNKVID…DYGMSLHMQK (217 aa). The interval 555 to 628 is c; it reads MMEEAGQGFM…FVKLVNKYIR (74 aa).

The protein belongs to the heat shock protein 90 family. As to quaternary structure, homodimer.

The protein resides in the cytoplasm. Molecular chaperone. Has ATPase activity. In Francisella tularensis subsp. novicida (strain U112), this protein is Chaperone protein HtpG.